The chain runs to 538 residues: Bifunctional purine biosynthesis protein PurH (538 aa).

Positions 8-158 (IPAPDKVKIR…KNHAYVTVVT (151 aa)) constitute an MGS-like domain.

This sequence belongs to the PurH family.

The enzyme catalyses (6R)-10-formyltetrahydrofolate + 5-amino-1-(5-phospho-beta-D-ribosyl)imidazole-4-carboxamide = 5-formamido-1-(5-phospho-D-ribosyl)imidazole-4-carboxamide + (6S)-5,6,7,8-tetrahydrofolate. The catalysed reaction is IMP + H2O = 5-formamido-1-(5-phospho-D-ribosyl)imidazole-4-carboxamide. Its pathway is purine metabolism; IMP biosynthesis via de novo pathway; 5-formamido-1-(5-phospho-D-ribosyl)imidazole-4-carboxamide from 5-amino-1-(5-phospho-D-ribosyl)imidazole-4-carboxamide (10-formyl THF route): step 1/1. The protein operates within purine metabolism; IMP biosynthesis via de novo pathway; IMP from 5-formamido-1-(5-phospho-D-ribosyl)imidazole-4-carboxamide: step 1/1. This is Bifunctional purine biosynthesis protein PurH from Agrobacterium fabrum (strain C58 / ATCC 33970) (Agrobacterium tumefaciens (strain C58)).